The sequence spans 426 residues: Enolase (426 aa).

Positions 32 to 53 (TGRAAVPSGASTGAYEAHEQRD) are disordered. Gln163 serves as a coordination point for (2R)-2-phosphoglycerate. Glu205 acts as the Proton donor in catalysis. The Mg(2+) site is built by Asp242, Glu285, and Asp312. Lys337, Arg366, Ser367, and Lys388 together coordinate (2R)-2-phosphoglycerate. Lys337 acts as the Proton acceptor in catalysis.

It belongs to the enolase family. The cofactor is Mg(2+).

The protein localises to the cytoplasm. Its subcellular location is the secreted. It is found in the cell surface. The catalysed reaction is (2R)-2-phosphoglycerate = phosphoenolpyruvate + H2O. Its pathway is carbohydrate degradation; glycolysis; pyruvate from D-glyceraldehyde 3-phosphate: step 4/5. Functionally, catalyzes the reversible conversion of 2-phosphoglycerate (2-PG) into phosphoenolpyruvate (PEP). It is essential for the degradation of carbohydrates via glycolysis. The chain is Enolase from Hyphomonas neptunium (strain ATCC 15444).